The primary structure comprises 292 residues: Protoheme IX farnesyltransferase (292 aa).

The next 9 membrane-spanning stretches (helical) occupy residues 12 to 32, 43 to 63, 94 to 114, 115 to 135, 144 to 164, 169 to 189, 216 to 236, 239 to 259, and 267 to 287; these read ITWL…PQAS, LLRL…TAAL, LAFG…GVNL, LSAG…TPMK, VGAI…AGGL, WVLF…IAWM, IVIY…LGMS, LYLV…VRVA, and ARGV…LMLL.

Belongs to the UbiA prenyltransferase family. Protoheme IX farnesyltransferase subfamily.

It localises to the cell inner membrane. The catalysed reaction is heme b + (2E,6E)-farnesyl diphosphate + H2O = Fe(II)-heme o + diphosphate. Its pathway is porphyrin-containing compound metabolism; heme O biosynthesis; heme O from protoheme: step 1/1. Its function is as follows. Converts heme B (protoheme IX) to heme O by substitution of the vinyl group on carbon 2 of heme B porphyrin ring with a hydroxyethyl farnesyl side group. The sequence is that of Protoheme IX farnesyltransferase from Solibacter usitatus (strain Ellin6076).